The chain runs to 384 residues: Carbazole 1,9a-dioxygenase, terminal oxygenase component CarAa (384 aa).

The region spanning 29–135 is the Rieske domain; it reads WYPVMFSKEI…VQEAKGCVFI (107 aa). [2Fe-2S] cluster is bound by residues Cys-69, His-71, Cys-90, and His-93.

As to quaternary structure, homotrimer. Carbazole 1,9a-dioxygenase complex consists of a terminal oxygenase component CarAa, a ferredoxin reductase component CarAd and a ferredoxin component CarAc. [2Fe-2S] cluster is required as a cofactor.

It carries out the reaction 9H-carbazole + NADH + O2 + H(+) = 2'-aminobiphenyl-2,3-diol + NAD(+). The catalysed reaction is 9H-carbazole + NADPH + O2 + H(+) = 2'-aminobiphenyl-2,3-diol + NADP(+). Its function is as follows. Part of the multicomponent carbazole 1,9a-dioxygenase (CARDO), that converts carbazole (CAR) into 2-aminobiphenyl-2,3-diol. Catalyzes the dioxygenation at the angular (C-9a) and adjacent (C-1) positions of carbazole to yield a highly unstable cis-hydrodiol intermediate which is spontaneously converted to 2-aminobiphenyl-2,3-diol. It is also able to attack the angular position adjacent of hetero atom of heterocyclic aromatic compounds such as polychlorinated dibenzo-p-dioxin (DD) and dibenzofuran (DBF). It was also shown that CARDO has the ability to metabolize biphenyl and polycyclic aromatic hydrocarbons, such as naphthalene and phenanthrene. This Metapseudomonas resinovorans (Pseudomonas resinovorans) protein is Carbazole 1,9a-dioxygenase, terminal oxygenase component CarAa (carAa).